The chain runs to 709 residues: Catalase HPII (709 aa).

The span at 1–26 (MSEQNNEQRSQAAGTDTVDRGNSNAK) shows a compositional bias: polar residues. Residues 1-32 (MSEQNNEQRSQAAGTDTVDRGNSNAKLEQLEA) form a disordered region. Catalysis depends on residues His90 and Asn163. Tyr377 lines the heme pocket. The tract at residues 419–443 (RASYEPNSIDGGWPKETPPAARNGG) is disordered.

Belongs to the catalase family. HPII subfamily. Heme is required as a cofactor.

The protein resides in the cytoplasm. It carries out the reaction 2 H2O2 = O2 + 2 H2O. Its function is as follows. Decomposes hydrogen peroxide into water and oxygen; serves to protect cells from the toxic effects of hydrogen peroxide. The chain is Catalase HPII (katE) from Pseudomonas aeruginosa (strain ATCC 15692 / DSM 22644 / CIP 104116 / JCM 14847 / LMG 12228 / 1C / PRS 101 / PAO1).